A 773-amino-acid polypeptide reads, in one-letter code: Histone-lysine N-methyltransferase mes-2 (773 aa).

The segment covering 1–13 has biased composition (polar residues); the sequence is MSNSEPSTSTPSG. The segment at 1–33 is disordered; sequence MSNSEPSTSTPSGKTKKRGKKCETSMGKSKKSK. The tract at residues 1–194 is interaction with mes-6; sequence MSNSEPSTST…TPDQLRLTHM (194 aa). Positions 505 to 614 constitute a CXC domain; sequence IREDDMRDSQ…SNIIKCRNFG (110 aa). The region spanning 616 to 737 is the SET domain; sequence TRMIQKRTYC…ISEELTFDYS (122 aa). Residues 749 to 773 are disordered; it reads VQTKERSEKPSRPKSQKLSKPMTSE. A compositionally biased stretch (basic and acidic residues) spans 750 to 759; sequence QTKERSEKPS.

This sequence belongs to the class V-like SAM-binding methyltransferase superfamily. Histone-lysine methyltransferase family. EZ subfamily. In terms of assembly, interacts directly with mes-6 via its N-terminal domain. Forms a heterotrimeric complex with mes-3 and mes-6. Does not interact with mes-4. In adults, it is predominantly expressed in the germline, and weakly expressed in intestinal cells. Expressed in the hypoderm.

It localises to the nucleus. It carries out the reaction L-lysyl(27)-[histone H3] + 3 S-adenosyl-L-methionine = N(6),N(6),N(6)-trimethyl-L-lysyl(27)-[histone H3] + 3 S-adenosyl-L-homocysteine + 3 H(+). Its function is as follows. Polycomb group (PcG) protein. Catalytic subunit of a the mes-2/mes-3/mes-6 complex, which methylates 'Lys-27' of histone H3, leading to transcriptional repression of the affected target genes. PcG proteins act by forming multiprotein complexes, which are required to maintain the transcriptionally repressive state of homeotic genes throughout development. In association with the nfya-1-NF-Y complex, may play a role in repressing the expression of the homeobox protein egl-5 in tissues such as the head. PcG proteins are not required to initiate repression, but to maintain it during later stages of development. The mes-2/mes-3/mes-6 complex may participate in the global inactivation of the X chromosomes in germline cells. This complex is required to exclude mes-4 from the inactivated X-chromosomes in germline cells. Required for small-RNA-induced H3K27 trimethylation. Involved in the negative regulation of lifespan in a germline-independent fashion. In Caenorhabditis elegans, this protein is Histone-lysine N-methyltransferase mes-2.